We begin with the raw amino-acid sequence, 493 residues long: ATP synthase subunit beta, chloroplastic (493 aa).

ATP is bound at residue G170–T177.

This sequence belongs to the ATPase alpha/beta chains family. F-type ATPases have 2 components, CF(1) - the catalytic core - and CF(0) - the membrane proton channel. CF(1) has five subunits: alpha(3), beta(3), gamma(1), delta(1), epsilon(1). CF(0) has four main subunits: a(1), b(1), b'(1) and c(9-12).

It localises to the plastid. Its subcellular location is the chloroplast thylakoid membrane. The catalysed reaction is ATP + H2O + 4 H(+)(in) = ADP + phosphate + 5 H(+)(out). Produces ATP from ADP in the presence of a proton gradient across the membrane. The catalytic sites are hosted primarily by the beta subunits. The chain is ATP synthase subunit beta, chloroplastic from Lachenalia pusilla (Cape cowslips).